Here is a 307-residue protein sequence, read N- to C-terminus: Protease HtpX homolog (307 aa).

2 helical membrane passes run 10–30 (VITI…AYGL) and 40–60 (ISII…QWLV). His144 lines the Zn(2+) pocket. Glu145 is an active-site residue. His148 is a Zn(2+) binding site. The next 2 helical transmembrane spans lie at 156–176 (LLLA…SMIF) and 187–207 (FFLV…MILG). Glu213 serves as a coordination point for Zn(2+).

Belongs to the peptidase M48B family. Zn(2+) is required as a cofactor.

It localises to the cell membrane. The sequence is that of Protease HtpX homolog from Picrophilus torridus (strain ATCC 700027 / DSM 9790 / JCM 10055 / NBRC 100828 / KAW 2/3).